The sequence spans 275 residues: Ribosomal RNA small subunit methyltransferase A (275 aa).

S-adenosyl-L-methionine contacts are provided by N21, L23, G48, E69, D94, and N115.

The protein belongs to the class I-like SAM-binding methyltransferase superfamily. rRNA adenine N(6)-methyltransferase family. RsmA subfamily.

The protein resides in the cytoplasm. The enzyme catalyses adenosine(1518)/adenosine(1519) in 16S rRNA + 4 S-adenosyl-L-methionine = N(6)-dimethyladenosine(1518)/N(6)-dimethyladenosine(1519) in 16S rRNA + 4 S-adenosyl-L-homocysteine + 4 H(+). Its function is as follows. Specifically dimethylates two adjacent adenosines (A1518 and A1519) in the loop of a conserved hairpin near the 3'-end of 16S rRNA in the 30S particle. May play a critical role in biogenesis of 30S subunits. The polypeptide is Ribosomal RNA small subunit methyltransferase A (Clostridium botulinum (strain ATCC 19397 / Type A)).